A 257-amino-acid chain; its full sequence is Hydroxyacylglutathione hydrolase (257 aa).

Histidine 54, histidine 56, aspartate 58, histidine 59, histidine 113, aspartate 137, and histidine 175 together coordinate Zn(2+).

The protein belongs to the metallo-beta-lactamase superfamily. Glyoxalase II family. As to quaternary structure, monomer. Requires Zn(2+) as cofactor.

The enzyme catalyses an S-(2-hydroxyacyl)glutathione + H2O = a 2-hydroxy carboxylate + glutathione + H(+). It functions in the pathway secondary metabolite metabolism; methylglyoxal degradation; (R)-lactate from methylglyoxal: step 2/2. In terms of biological role, thiolesterase that catalyzes the hydrolysis of S-D-lactoyl-glutathione to form glutathione and D-lactic acid. This chain is Hydroxyacylglutathione hydrolase, found in Crocosphaera subtropica (strain ATCC 51142 / BH68) (Cyanothece sp. (strain ATCC 51142)).